We begin with the raw amino-acid sequence, 322 residues long: NADH-quinone oxidoreductase subunit H (322 aa).

9 helical membrane passes run 15 to 35, 50 to 69, 81 to 101, 114 to 134, 149 to 169, 186 to 206, 237 to 257, 265 to 285, and 302 to 322; these read FFKV…LSIV, NRVG…KILF, FIFV…IPII, IGIL…LFAG, ACVQ…GVVA, IWNV…GLAV, FFIG…TLFF, IPGC…FILI, and WKFC…LILV.

This sequence belongs to the complex I subunit 1 family. In terms of assembly, NDH-1 is composed of 13 different subunits. Subunits NuoA, H, J, K, L, M, N constitute the membrane sector of the complex.

It localises to the cell membrane. It catalyses the reaction a quinone + NADH + 5 H(+)(in) = a quinol + NAD(+) + 4 H(+)(out). NDH-1 shuttles electrons from NADH, via FMN and iron-sulfur (Fe-S) centers, to quinones in the respiratory chain. The immediate electron acceptor for the enzyme in this species is believed to be ubiquinone. Couples the redox reaction to proton translocation (for every two electrons transferred, four hydrogen ions are translocated across the cytoplasmic membrane), and thus conserves the redox energy in a proton gradient. This subunit may bind ubiquinone. This chain is NADH-quinone oxidoreductase subunit H, found in Buchnera aphidicola subsp. Acyrthosiphon pisum (strain 5A).